Reading from the N-terminus, the 67-residue chain is Large ribosomal subunit protein uL29 (67 aa).

Belongs to the universal ribosomal protein uL29 family.

The polypeptide is Large ribosomal subunit protein uL29 (Exiguobacterium sibiricum (strain DSM 17290 / CCUG 55495 / CIP 109462 / JCM 13490 / 255-15)).